The primary structure comprises 274 residues: S-adenosylmethionine-dependent nucleotide dehydratase (274 aa).

Residues 1-215 (MAYKVNLHIT…VERHAEVSHD (215 aa)) enclose the Radical SAM core domain. [4Fe-4S] cluster-binding residues include C13, C17, and C20.

Belongs to the radical SAM superfamily. Prokaryotic viperin family. [4Fe-4S] cluster is required as a cofactor.

The catalysed reaction is CTP + AH2 + S-adenosyl-L-methionine = 3'-deoxy-3',4'-didehydro-CTP + 5'-deoxyadenosine + L-methionine + A + H2O + H(+). Expression of pVip6 in E.coli (strain MG1655) confers resistance to phages lambda, P1, SECphi6, SECphi8 and T7. Catalyzes the conversion of cytidine triphosphate (CTP) to 3'-deoxy-3',4'-didehydro-CTP (ddhCTP), probably via a SAM-dependent radical mechanism. The modified nucleotide represses transcription from T7 RNA polymerase-directed genes (possibly by acting as chain terminators), strongly suggesting these nucleotides block viral polymerase transcription. In Selenomonas ruminantium, this protein is S-adenosylmethionine-dependent nucleotide dehydratase.